Here is a 554-residue protein sequence, read N- to C-terminus: 3-(3-hydroxy-phenyl)propionate/3-hydroxycinnamic acid hydroxylase (554 aa).

Residues 17 to 46 (QVAI…VVEK) and 285 to 295 (FRIDRVLLAGD) each bind FAD.

This sequence belongs to the PheA/TfdB FAD monooxygenase family. FAD is required as a cofactor.

The enzyme catalyses 3-(3-hydroxyphenyl)propanoate + NADH + O2 + H(+) = 3-(2,3-dihydroxyphenyl)propanoate + NAD(+) + H2O. It carries out the reaction (2E)-3-(3-hydroxyphenyl)prop-2-enoate + NADH + O2 + H(+) = (2E)-3-(2,3-dihydroxyphenyl)prop-2-enoate + NAD(+) + H2O. It functions in the pathway aromatic compound metabolism; 3-phenylpropanoate degradation. Its function is as follows. Catalyzes the insertion of one atom of molecular oxygen into position 2 of the phenyl ring of 3-(3-hydroxyphenyl)propionate (3-HPP) and hydroxycinnamic acid (3HCI). This Escherichia coli (strain K12 / DH10B) protein is 3-(3-hydroxy-phenyl)propionate/3-hydroxycinnamic acid hydroxylase.